Here is a 299-residue protein sequence, read N- to C-terminus: Acetylglutamate kinase (299 aa).

Substrate-binding positions include 64–65 (GG), Arg86, and Asn197.

The protein belongs to the acetylglutamate kinase family. ArgB subfamily.

The protein localises to the cytoplasm. It catalyses the reaction N-acetyl-L-glutamate + ATP = N-acetyl-L-glutamyl 5-phosphate + ADP. Its pathway is amino-acid biosynthesis; L-arginine biosynthesis; N(2)-acetyl-L-ornithine from L-glutamate: step 2/4. Functionally, catalyzes the ATP-dependent phosphorylation of N-acetyl-L-glutamate. The sequence is that of Acetylglutamate kinase from Sulfurihydrogenibium sp. (strain YO3AOP1).